A 552-amino-acid chain; its full sequence is Low-affinity Fe(2+) transport protein (552 aa).

Over 1-97 (MGKIAEFLGN…DFLVRVAGSQ (97 aa)) the chain is Extracellular. K39 participates in a covalent cross-link: Glycyl lysine isopeptide (Lys-Gly) (interchain with G-Cter in ubiquitin). S48 and S50 each carry phosphoserine. The helical transmembrane segment at 98 to 118 (AVFFIVWIILIIWVVIGIVYN) threads the bilayer. At 119 to 225 (APFNWQVVMQ…SNVASRYMGS (107 aa)) the chain is on the cytoplasmic side. A helical transmembrane segment spans residues 226–246 (IAAMVIFWIGIFVWIGCGAIP). At 247–271 (KDAGNTPPYTGETTGSNPRLKKFSD) the chain is on the extracellular side. Residues 272-292 (AWQMYINTAVAVSLLICTTFL) form a helical membrane-spanning segment. Residues 293-354 (QNIRARHDYF…GRKMIDWYAD (62 aa)) are Cytoplasmic-facing. The chain crosses the membrane as a helical span at residues 355–375 (IIGTGIGVLIGVAVFATWIGI). The Extracellular portion of the chain corresponds to 376–383 (GSPMKWDD). Residues 384–404 (NWWLIIGTYTGLIGFLDGFVL) traverse the membrane as a helical segment. The Cytoplasmic segment spans residues 405-465 (REVYFRIVQH…SQYINRICST (61 aa)). Residues 466 to 486 (PWSVLVSVIIIIGLICIASGL) form a helical membrane-spanning segment. Over 487–493 (RWSTTGQ) the chain is Extracellular. The chain crosses the membrane as a helical span at residues 494–514 (LIANTPTMIIEEFFLLVLLQA). Residues 515-552 (HNWADRQRRVEVTALYARRRILLSYVEKRFPEVMMLEK) lie on the Cytoplasmic side of the membrane.

The protein belongs to the FET4 family.

Its subcellular location is the membrane. Its function is as follows. Required for Fe(2+) ion low affinity uptake. The sequence is that of Low-affinity Fe(2+) transport protein (FET4) from Saccharomyces cerevisiae (strain ATCC 204508 / S288c) (Baker's yeast).